The chain runs to 317 residues: uncharacterized protein (317 aa).

7 helical membrane-spanning segments follow: residues 18 to 38, 58 to 78, 92 to 112, 130 to 150, 165 to 185, 202 to 222, and 253 to 273; these read WWII…LIII, IIFG…GFIF, FLGH…WWSV, LFAT…AFGV, QPLS…KGEL, LAFL…LSTV, and LWGG…LMVN.

The protein belongs to the CbiQ family.

It is found in the cell membrane. This is an uncharacterized protein from Mycoplasma pneumoniae (strain ATCC 29342 / M129 / Subtype 1) (Mycoplasmoides pneumoniae).